We begin with the raw amino-acid sequence, 144 residues long: Large ribosomal subunit protein uL13 (144 aa).

This sequence belongs to the universal ribosomal protein uL13 family. As to quaternary structure, part of the 50S ribosomal subunit.

This protein is one of the early assembly proteins of the 50S ribosomal subunit, although it is not seen to bind rRNA by itself. It is important during the early stages of 50S assembly. This Moorella thermoacetica (strain ATCC 39073 / JCM 9320) protein is Large ribosomal subunit protein uL13.